A 246-amino-acid chain; its full sequence is Mediator of RNA polymerase II transcription subunit 6 (246 aa).

Disordered stretches follow at residues methionine 165–asparagine 186 and glutamate 207–lysine 246. 2 stretches are compositionally biased toward basic and acidic residues: residues lysine 166–serine 184 and alanine 208–glutamate 224.

Belongs to the Mediator complex subunit 6 family. Component of the Mediator complex. Interacts with let-19/mdt-13. Interacts with RNA polymerase II. Interacts with mdt-28.

Its subcellular location is the nucleus. Functionally, component of the Mediator complex, a coactivator involved in the regulated transcription of nearly all RNA polymerase II-dependent genes. Mediator functions as a bridge to convey information from gene-specific regulatory proteins to the basal RNA polymerase II transcription machinery. Mediator is recruited to promoters by direct interactions with regulatory proteins and serves as a scaffold for the assembly of a functional preinitiation complex with RNA polymerase II and the general transcription factors. This Caenorhabditis briggsae protein is Mediator of RNA polymerase II transcription subunit 6 (mdt-6).